We begin with the raw amino-acid sequence, 358 residues long: Branched-chain amino acid aminotransferase gloG (358 aa).

Pyridoxal 5'-phosphate is bound at residue Arg91. Lys195 acts as the Proton acceptor in catalysis. Lys195 bears the N6-(pyridoxal phosphate)lysine mark. Residue Glu231 coordinates pyridoxal 5'-phosphate.

This sequence belongs to the class-IV pyridoxal-phosphate-dependent aminotransferase family. Pyridoxal 5'-phosphate is required as a cofactor.

It carries out the reaction L-isoleucine + 2-oxoglutarate = (S)-3-methyl-2-oxopentanoate + L-glutamate. The catalysed reaction is L-leucine + 2-oxoglutarate = 4-methyl-2-oxopentanoate + L-glutamate. It catalyses the reaction L-valine + 2-oxoglutarate = 3-methyl-2-oxobutanoate + L-glutamate. It functions in the pathway mycotoxin biosynthesis. Functionally, branched-chain amino acid aminotransferase; part of the gene cluster that mediates the biosynthesis of pneumocandins, lipohexapeptides of the echinocandin family that prevent fungal cell wall formation by non-competitive inhibition of beta-1,3-glucan synthase. The 10,12-dimethylmyristoyl side chain is synthesized by the reducing polyketide synthase gloL/GLPKS4. The thioesterase gloN/GLHYD exclusively interacts with gloL/GLPKS4 to maintain turnover of the polyketide side chain. The 10R,12S-dimethylmyristic acid is then transferred to the first thiolation domain of the nonribosomal peptide synthetase gloA/GLNRPS4 by the acyl-AMP ligase gloD/GLligase, followed by its acylation to L-ornithine to trigger elongation of the cyclic hexapeptide. L-ornithine, 4R-hydroxyl-L-proline (generated from L-proline by the dioxygenase gloF/GLOXY2), 3S-hydroxyl-L-homotyrosine (generated by gloG/GLHtyB, gloH/GLHtyA, gloI/GLHtyC, gloJ/GLHtyD and hydroxylated at C-3 by the dioxygenase gloM/GLOXY1), 3R-hydroxyl-L-glutamine (generated from L-glutamine probably by the dioxygenase gloE/GLOXY3) and 3S-hydroxyl-L-proline (generated from L-proline by the dioxygenase gloF/GLOXY2 to yield pneumocandin B0), or 3S-hydroxyl-4S-methyl-L-proline (generated from L-leucine by the dioxygenase gloC/GLOXY4 to yield pneumocandin A0) are sequentially added to the growing chain. The last C domain of gloA/GLNRPS4 is proposed to be responsible for cyclization by condensation to form the peptide bond between L-ornithine and 3S-hydroxyl-4S-methyl-L-proline (for pneumocandin A0) or 3S-hydroxyl-L-proline (for pneumocandin B0). Finally, the subsequent C-4 hydroxylation of 3S-hydroxyl-L-homotyrosine and L-ornithine dihydroxylation at C-4 and C-5 are performed by the cytochrome P450 monooxygenases gloP/GLP450-1 and gloO/GLP450-2, respectively. This Glarea lozoyensis (strain ATCC 20868 / MF5171) protein is Branched-chain amino acid aminotransferase gloG.